Reading from the N-terminus, the 330-residue chain is Complement factor H-related protein 3 (330 aa).

A signal peptide spans 1–18 (MLLLINVILTLWVSCANG). Sushi domains follow at residues 22–84 (PCDF…VPCL), 85–142 (RKCY…RCIR), 144–205 (RTCS…ICIN), 208–266 (EKCG…RCIH), and 267–330 (PCII…PRCE). Intrachain disulfides connect Cys-23/Cys-72, Cys-55/Cys-83, Cys-87/Cys-129, Cys-114/Cys-140, Cys-146/Cys-192, and Cys-175/Cys-203. A glycan (N-linked (GlcNAc...) asparagine) is linked at Asn-108. 2 N-linked (GlcNAc...) asparagine glycosylation sites follow: Asn-185 and Asn-205. Disulfide bonds link Cys-210–Cys-253, Cys-239–Cys-264, Cys-268–Cys-319, and Cys-302–Cys-329. Asn-309 is a glycosylation site (N-linked (GlcNAc...) asparagine).

Expressed by the liver and secreted in plasma.

The protein localises to the secreted. Functionally, might be involved in complement regulation. This chain is Complement factor H-related protein 3 (CFHR3), found in Homo sapiens (Human).